The following is a 173-amino-acid chain: Photosystem I assembly protein Ycf3 (173 aa).

TPR repeat units lie at residues 35 to 68 (AFVY…EEDT), 72 to 105 (GYIL…NPRL), and 120 to 153 (GEKA…APNN).

Belongs to the Ycf3 family.

It is found in the cellular thylakoid membrane. Functionally, essential for the assembly of the photosystem I (PSI) complex. May act as a chaperone-like factor to guide the assembly of the PSI subunits. This Nostoc sp. (strain PCC 7120 / SAG 25.82 / UTEX 2576) protein is Photosystem I assembly protein Ycf3.